The following is a 486-amino-acid chain: N-succinylglutamate 5-semialdehyde dehydrogenase (486 aa).

Residue 220 to 225 coordinates NAD(+); the sequence is GSSRTG. Active-site residues include Glu243 and Cys277.

Belongs to the aldehyde dehydrogenase family. AstD subfamily.

It catalyses the reaction N-succinyl-L-glutamate 5-semialdehyde + NAD(+) + H2O = N-succinyl-L-glutamate + NADH + 2 H(+). Its pathway is amino-acid degradation; L-arginine degradation via AST pathway; L-glutamate and succinate from L-arginine: step 4/5. Its function is as follows. Catalyzes the NAD-dependent reduction of succinylglutamate semialdehyde into succinylglutamate. This chain is N-succinylglutamate 5-semialdehyde dehydrogenase, found in Shewanella sediminis (strain HAW-EB3).